We begin with the raw amino-acid sequence, 393 residues long: Transcription factor bHLH112 (393 aa).

Disordered regions lie at residues Thr-248–Pro-277 and Lys-332–His-356. Positions Ser-254–Ala-265 are enriched in basic and acidic residues. Residues Val-270–Leu-319 enclose the bHLH domain. The segment covering Lys-332 to Ser-347 has biased composition (low complexity).

In terms of assembly, homodimer.

It is found in the nucleus. This is Transcription factor bHLH112 (BHLH112) from Arabidopsis thaliana (Mouse-ear cress).